A 209-amino-acid polypeptide reads, in one-letter code: MIGLIGRKVGMTRVFTEEGVSIPVTVVEVEANRVAQVKTLETDGYAAIQVTAGTKKANRVNKAEAGHFAKAGVEAGRGLWEFRLENGEEFAVGSELTVELFNEVKKVDVTGTSKGKGFQGTVKRWNFRTQDMTHGNSLSHRAPGSIGQCQTPGRVFKGKKMAGHMGAERVTTQNLEIVRVDAERNLLLIKGAVPGATGGNVIVKPAVKA.

Q150 is modified (N5-methylglutamine).

This sequence belongs to the universal ribosomal protein uL3 family. As to quaternary structure, part of the 50S ribosomal subunit. Forms a cluster with proteins L14 and L19. Post-translationally, methylated by PrmB.

Its function is as follows. One of the primary rRNA binding proteins, it binds directly near the 3'-end of the 23S rRNA, where it nucleates assembly of the 50S subunit. This chain is Large ribosomal subunit protein uL3, found in Vibrio vulnificus (strain CMCP6).